The following is a 118-amino-acid chain: Acidic phospholipase A2 PA-3 (118 aa).

Cystine bridges form between cysteine 11-cysteine 71, cysteine 27-cysteine 117, cysteine 29-cysteine 45, cysteine 44-cysteine 98, cysteine 51-cysteine 91, cysteine 60-cysteine 84, and cysteine 78-cysteine 89. Residues tyrosine 28, glycine 30, and glycine 32 each coordinate Ca(2+). The active site involves histidine 48. Aspartate 49 contributes to the Ca(2+) binding site. The active site involves aspartate 92.

This sequence belongs to the phospholipase A2 family. Group I subfamily. D49 sub-subfamily. Ca(2+) serves as cofactor. In terms of tissue distribution, expressed by the venom gland.

The protein localises to the secreted. It carries out the reaction a 1,2-diacyl-sn-glycero-3-phosphocholine + H2O = a 1-acyl-sn-glycero-3-phosphocholine + a fatty acid + H(+). PLA2 catalyzes the calcium-dependent hydrolysis of the 2-acyl groups in 3-sn-phosphoglycerides. The sequence is that of Acidic phospholipase A2 PA-3 from Pseudechis australis (Mulga snake).